The chain runs to 541 residues: ATP synthase subunit alpha (541 aa).

169 to 176 (GDRQTGKT) provides a ligand contact to ATP. The disordered stretch occupies residues 506–541 (NTLLNVEEGDTGEEENNEGHNKAEQDTEEKDTEEVV). Composition is skewed to acidic residues over residues 512-521 (EEGDTGEEEN) and 531-541 (DTEEKDTEEVV).

Belongs to the ATPase alpha/beta chains family. As to quaternary structure, F-type ATPases have 2 components, CF(1) - the catalytic core - and CF(0) - the membrane proton channel. CF(1) has five subunits: alpha(3), beta(3), gamma(1), delta(1), epsilon(1). CF(0) has three main subunits: a(1), b(2) and c(9-12). The alpha and beta chains form an alternating ring which encloses part of the gamma chain. CF(1) is attached to CF(0) by a central stalk formed by the gamma and epsilon chains, while a peripheral stalk is formed by the delta and b chains.

It localises to the cell inner membrane. It catalyses the reaction ATP + H2O + 4 H(+)(in) = ADP + phosphate + 5 H(+)(out). Produces ATP from ADP in the presence of a proton gradient across the membrane. The alpha chain is a regulatory subunit. This Halothermothrix orenii (strain H 168 / OCM 544 / DSM 9562) protein is ATP synthase subunit alpha.